Here is a 202-residue protein sequence, read N- to C-terminus: Coiled-coil domain-containing protein 69 (202 aa).

Residues 1–11 are compositionally biased toward basic residues; it reads MGCRQSRHSRG. Disordered regions lie at residues 1–20 and 32–52; these read MGCR…VEET and GRIL…SNAQ. The N-myristoyl glycine moiety is linked to residue Gly-2. Residues 32–42 show a composition bias toward basic and acidic residues; that stretch reads GRILEGRHEEA. Phosphoserine is present on Ser-92. Residues 112–146 adopt a coiled-coil conformation; sequence WEQELESLHHVIEMKNERIHELEKQLFLLEMLKEK.

Belongs to the CCDC69 family.

It is found in the cytoplasm. Its subcellular location is the cytoskeleton. It localises to the spindle. The protein resides in the midbody. In terms of biological role, may act as a scaffold to regulate the recruitment and assembly of spindle midzone components. Required for the localization of AURKB and PLK1 to the spindle midzone. The protein is Coiled-coil domain-containing protein 69 (Ccdc69) of Mus musculus (Mouse).